An 846-amino-acid chain; its full sequence is Spindle pole body component SPC98 (846 aa).

2 positions are modified to phosphoserine: Ser-124 and Ser-136.

The protein belongs to the TUBGCP family. Interacts with TUB4, SPC72 and SPC97.

The protein resides in the nucleus. The protein localises to the cytoplasm. It localises to the cytoskeleton. Its subcellular location is the microtubule organizing center. It is found in the spindle pole body. Its function is as follows. Involved in microtubule organization by the microtubule organizing center, the spindle pole body (SPB). Probably part of the microtubule attachment site at the SPB. This chain is Spindle pole body component SPC98 (SPC98), found in Saccharomyces cerevisiae (strain ATCC 204508 / S288c) (Baker's yeast).